A 384-amino-acid chain; its full sequence is Ceramide very long chain fatty acid hydroxylase SCS7 (384 aa).

Over 1 to 197 the chain is Cytoplasmic; it reads MSTNTSKTLE…NFLEPLTKTA (197 aa). Residues 9-90 form the Cytochrome b5 heme-binding domain; sequence LELFSKKTVQ…EDEYLIGYLA (82 aa). Heme-binding residues include H45 and H72. Residues 198–216 traverse the membrane as a helical segment; sequence WWVVPVAWLPVVVYHMGVA. Residues 217–221 lie on the Lumenal side of the membrane; that stretch reads LKNMN. The chain crosses the membrane as a helical span at residues 222-246; the sequence is QLFACFLFCVGVFVWTLIEYGLHRF. The Zn(2+) site is built by H244, H249, H268, H271, and H272. Over 247–284 the chain is Cytoplasmic; that stretch reads LFHFDDWLPESNIAFATHFLLHGCHHYLPMDKYRLVMP. Residues 285 to 302 form a helical membrane-spanning segment; it reads PTLFVILCAPFYKLVFAL. Residues 303 to 304 are Lumenal-facing; sequence LP. The chain crosses the membrane as a helical span at residues 305 to 328; sequence LYWAYAGFAGGLFGYVCYDECHFF. 5 residues coordinate Zn(2+): H326, H330, H345, H348, and H349. Residues 329–384 lie on the Cytoplasmic side of the membrane; that stretch reads LHHSKLPPFMRKLKKYHLEHHYKNYQLGFGVTSWFWDEVFGTYLGPDAPLSKMKYE.

The protein belongs to the sterol desaturase family. SCS7 subfamily. It depends on Zn(2+) as a cofactor.

The protein resides in the endoplasmic reticulum membrane. The enzyme catalyses an N-(1,2 saturated acyl)-(4R)-hydroxysphinganine + 2 Fe(II)-[cytochrome b5] + O2 + 2 H(+) = an N-(2R-hydroxyacyl)-4R-hydroxysphinganine + 2 Fe(III)-[cytochrome b5] + H2O. The catalysed reaction is an N-(1,2-saturated acyl)sphinganine + 2 Fe(II)-[cytochrome b5] + O2 + 2 H(+) = an N-[(2'R)-hydroxyacyl]sphinganine + 2 Fe(III)-[cytochrome b5] + H2O. It catalyses the reaction N-hexacosanoyl-(4R)-hydroxysphinganine + 2 Fe(II)-[cytochrome b5] + O2 + 2 H(+) = N-(2-hydroxyhexacosanyl)-(4R)-hydroxysphinganine + 2 Fe(III)-[cytochrome b5] + H2O. Its pathway is sphingolipid metabolism. Functionally, ceramide hydroxylase involved in the hydroxylation of sphingolipid-associated very long chain fatty acids. Postulated to hydroxylate the very long chain fatty acid of dihydroceramides and phytoceramides at C-2. This Saccharomyces cerevisiae (strain ATCC 204508 / S288c) (Baker's yeast) protein is Ceramide very long chain fatty acid hydroxylase SCS7.